A 450-amino-acid polypeptide reads, in one-letter code: Molybdate-anion transporter (450 aa).

Helical transmembrane passes span 1–21 (MLVT…GLEL), 43–63 (LDFY…APYL), 79–99 (ILYV…SSLV), 128–148 (FVLL…FSAF), 176–196 (FWNH…ACWM), 198–218 (LGPV…GALA), 249–269 (VLLL…FVFL), 278–298 (GAPL…GSSL), 311–331 (PMHL…MLTF), 344–364 (FIAF…MSFL), 376–396 (GVLN…LLVL), and 409–429 (FSIC…LFTV).

It belongs to the major facilitator superfamily.

The protein resides in the cell membrane. Functionally, mediates high-affinity intracellular uptake of the rare oligo-element molybdenum. This chain is Molybdate-anion transporter (MFSD5), found in Bos taurus (Bovine).